The sequence spans 144 residues: 3-dehydroquinate dehydratase (144 aa).

Y22 acts as the Proton acceptor in catalysis. N73, H79, and D86 together coordinate substrate. The active-site Proton donor is the H99. Residues 100-101 and R110 contribute to the substrate site; that span reads LS.

The protein belongs to the type-II 3-dehydroquinase family. As to quaternary structure, homododecamer.

The enzyme catalyses 3-dehydroquinate = 3-dehydroshikimate + H2O. The protein operates within metabolic intermediate biosynthesis; chorismate biosynthesis; chorismate from D-erythrose 4-phosphate and phosphoenolpyruvate: step 3/7. In terms of biological role, catalyzes a trans-dehydration via an enolate intermediate. The polypeptide is 3-dehydroquinate dehydratase (Geotalea daltonii (strain DSM 22248 / JCM 15807 / FRC-32) (Geobacter daltonii)).